Consider the following 93-residue polypeptide: UPF0457 protein GTNG_2792 (93 aa).

This sequence belongs to the UPF0457 family.

The sequence is that of UPF0457 protein GTNG_2792 from Geobacillus thermodenitrificans (strain NG80-2).